Consider the following 387-residue polypeptide: Phosphoglycerate kinase (387 aa).

Residues 21-23 (DLN), arginine 36, 59-62 (HLGR), arginine 113, and arginine 146 each bind substrate. Residues lysine 197, glutamate 314, and 340–343 (GGDT) contribute to the ATP site.

This sequence belongs to the phosphoglycerate kinase family. Monomer.

Its subcellular location is the cytoplasm. It catalyses the reaction (2R)-3-phosphoglycerate + ATP = (2R)-3-phospho-glyceroyl phosphate + ADP. Its pathway is carbohydrate degradation; glycolysis; pyruvate from D-glyceraldehyde 3-phosphate: step 2/5. The sequence is that of Phosphoglycerate kinase from Pseudomonas syringae pv. syringae (strain B728a).